An 839-amino-acid chain; its full sequence is Homeobox-leucine zipper protein HOX10 (839 aa).

2 disordered regions span residues Met-1–Asp-24 and Gln-132–Ser-157. Residues Asp-24–Lys-87 constitute a DNA-binding region (homeobox). The stretch at Arg-91–Thr-134 forms a coiled coil. One can recognise an START domain in the interval Asp-155–Val-383.

The protein belongs to the HD-ZIP homeobox family. Class III subfamily. Expressed in stems, leaf sheaths and blades and panicles.

Its subcellular location is the nucleus. Functionally, probable transcription factor. This is Homeobox-leucine zipper protein HOX10 (HOX10) from Oryza sativa subsp. japonica (Rice).